Reading from the N-terminus, the 807-residue chain is Ecotropic viral integration site 5 ortholog (807 aa).

A disordered region spans residues 1–31; it reads MTLTTTTTASSAESQAKMDVKGGALPGEENL. Thr33 is modified (phosphothreonine). Phosphoserine is present on residues Ser58 and Ser64. One can recognise a Rab-GAP TBC domain in the interval 116–300; it reads GIPHHFRAIV…RIMDVFLSEG (185 aa). Coiled coils occupy residues 352-463, 494-583, and 627-772; these read SIKL…ENNV, CLLE…ENQR, and REME…RGKF.

In terms of assembly, interacts with Rab11.

It localises to the cytoplasm. It is found in the endosome. Functionally, functions as a GTPase-activating protein (GAP). During border cell migration in the ovary, acts as a GAP for Rab11 and is necessary for the maintenance of active receptor tyrosine kinases at the leading edge. In Drosophila melanogaster (Fruit fly), this protein is Ecotropic viral integration site 5 ortholog (Evi5).